The sequence spans 160 residues: Transcription antitermination protein NusB (160 aa).

It belongs to the NusB family.

Its function is as follows. Involved in transcription antitermination. Required for transcription of ribosomal RNA (rRNA) genes. Binds specifically to the boxA antiterminator sequence of the ribosomal RNA (rrn) operons. This chain is Transcription antitermination protein NusB, found in Gluconobacter oxydans (strain 621H) (Gluconobacter suboxydans).